Here is a 1330-residue protein sequence, read N- to C-terminus: Ubinuclein-2 (1330 aa).

A disordered region spans residues 1-113 (MAEPRRVAFI…PPPRPPKETV (113 aa)). The residue at position 13 (Ser-13) is a Phosphoserine. Basic and acidic residues-rich tracts occupy residues 16 to 31 (RRREADFAGAEREPPR) and 55 to 67 (ARDKPLPQREVSR). Residues 81–96 (PEPPPPPLPLQTPPPR) are compositionally biased toward pro residues. Thr-229 carries the phosphothreonine modification. Position 236 is a phosphoserine (Ser-236). Disordered stretches follow at residues 236–304 (SDTE…KKRY) and 322–345 (DALKKESTPKVPVIPSTSSLPKPP). Thr-238 is subject to Phosphothreonine. Lys-258 participates in a covalent cross-link: Glycyl lysine isopeptide (Lys-Gly) (interchain with G-Cter in SUMO2). The residue at position 297 (Ser-297) is a Phosphoserine. Ser-402, Ser-405, Ser-408, and Ser-570 each carry phosphoserine. 7 disordered regions span residues 559-583 (LQADEEREKNGSDDDDDEKPGKRVI), 767-789 (NKGPSVSSRLNVPTTKPRPGLRE), 801-835 (LATPKKLDSPQTAHSSSLIAGHTGPVPKKPQDLAH), 866-909 (GLQR…SLTQ), 964-991 (YRLPLSTPSPGNGSQGSHPLVSRTAPST), 1021-1202 (PKLA…SSVV), and 1292-1330 (PGTQHAATLPHSPLPTHLQQAFNDGGQSKGDTKLPRKPQ). The span at 560 to 570 (QADEEREKNGS) shows a compositional bias: basic and acidic residues. Polar residues-rich tracts occupy residues 767-780 (NKGPSVSSRLNVPT) and 809-818 (SPQTAHSSSL). Positions 866 to 895 (GLQRSSQIHASSSQTHVSSSQAQAAASSHA) are enriched in low complexity. Polar residues-rich tracts occupy residues 899–909 (SEAQDASSLTQ) and 969–980 (STPSPGNGSQGS). Positions 1030-1044 (ATSPKPLTSPKPSVS) are enriched in pro residues. Positions 1045-1056 (PKPSLSAKPSVS) are enriched in low complexity. Lys-1052 is modified (N6-acetyllysine). Polar residues-rich tracts occupy residues 1073 to 1148 (PSSS…NSLS), 1158 to 1169 (RGSNLNSSGANR), and 1308 to 1317 (HLQQAFNDGG). Ser-1107 bears the Phosphoserine mark. An N6-acetyllysine modification is found at Lys-1132. Residues 1321–1330 (GDTKLPRKPQ) show a composition bias toward basic and acidic residues.

The protein belongs to the ubinuclein family.

This is Ubinuclein-2 (Ubn2) from Rattus norvegicus (Rat).